A 107-amino-acid chain; its full sequence is Large ribosomal subunit protein bL21 (107 aa).

The protein belongs to the bacterial ribosomal protein bL21 family. Part of the 50S ribosomal subunit. Contacts protein L20.

In terms of biological role, this protein binds to 23S rRNA in the presence of protein L20. The polypeptide is Large ribosomal subunit protein bL21 (Chlamydia muridarum (strain MoPn / Nigg)).